A 144-amino-acid polypeptide reads, in one-letter code: Bacilliredoxin BCE33L1972 (144 aa).

It belongs to the bacilliredoxin family.

In Bacillus cereus (strain ZK / E33L), this protein is Bacilliredoxin BCE33L1972.